Consider the following 929-residue polypeptide: Formin-like protein 11 (929 aa).

The first 28 residues, 1–28 (MMRHCRREWLLALCLISVQLLIPTGCEG), serve as a signal peptide directing secretion. The disordered stretch occupies residues 153 to 215 (ESSTTKSIPE…KSVAEKKKDS (63 aa)). The span at 171–189 (KTSTPKPVNKPTDSVSSPP) shows a compositional bias: polar residues. A compositionally biased stretch (basic and acidic residues) spans 191-215 (RSYKSAPTEKENPPTKSVAEKKKDS). Residues 222-242 (FIGLSIAGIALMAHLCLCCFM) form a helical membrane-spanning segment. 2 disordered regions span residues 372–472 (PVGS…ENSN) and 726–749 (AAKEQNSGVSSVKTDDLGDKSEQT). The span at 382–447 (MQPPVMPPPI…GPPRPPPPAM (66 aa)) shows a compositional bias: pro residues. One can recognise an FH2 domain in the interval 468 to 898 (VENSNEAKTK…KAKAKQPSQS (431 aa)). The segment covering 738 to 749 (KTDDLGDKSEQT) has biased composition (basic and acidic residues).

This sequence belongs to the formin-like family. Class-I subfamily.

The protein localises to the membrane. The polypeptide is Formin-like protein 11 (FH11) (Oryza sativa subsp. japonica (Rice)).